The chain runs to 630 residues: Sodium-dependent serotonin transporter (630 aa).

Topologically, residues 1 to 87 (METTALNSQK…ERETWGKKVD (87 aa)) are cytoplasmic. Residue Y47 is modified to Phosphotyrosine. A helical transmembrane segment spans residues 88–112 (FLLSVIGYAVDLGNIWRFPYVCYQN). Na(+) is bound by residues G94, A96, V97, D98, and N101. Residue D98 coordinates serotonin. Residues 113 to 115 (GGG) lie on the Extracellular side of the membrane. The helical transmembrane segment at 116–135 (AFLLPYIIMAIFGGIPLFYM) threads the bilayer. Topologically, residues 136 to 160 (ELALGQYHRNGCISIWRKICPIFKG) are cytoplasmic. The residue at position 142 (Y142) is a Phosphotyrosine. A helical membrane pass occupies residues 161-186 (IGYTICIIAFYIASYYNTIIAWALYY). Over 187 to 252 (LISSFTDRLP…KGLQDVGGVS (66 aa)) the chain is Extracellular. C200 and C209 are oxidised to a cystine. N208 and N217 each carry an N-linked (GlcNAc...) asparagine glycan. The chain crosses the membrane as a helical span at residues 253–271 (WQLTLCIMLIFTIIYFSIW). The Cytoplasmic segment spans residues 272–277 (KGVKTS). Phosphothreonine is present on T276. The helical transmembrane segment at 278 to 297 (GKVVWVTATFPYIVLSVLLV) threads the bilayer. Residues 298-324 (RGATLPGAWKGVLFYLKPNWQKLLETG) lie on the Extracellular side of the membrane. Residues 325-347 (VWIDAAAQIFFSLGPGFGVLLAF) traverse the membrane as a helical segment. Na(+) is bound at residue S336. Topologically, residues 348 to 360 (ASYNKFNNNCYQD) are cytoplasmic. Residues 361–380 (ALVTSAVNCMTSFVSGFVIF) form a helical membrane-spanning segment. Position 368 (N368) interacts with Na(+). Over 381–421 (TVLGYMAEMRSEDVSEVAKDAGPSLLFITYAEAIANMPAST) the chain is Extracellular. The chain crosses the membrane as a helical span at residues 422-443 (FFAIIFFLMLITLGLDSTFAGL). Residues L434, D437, and S438 each contribute to the Na(+) site. T439 is a serotonin binding site. The Cytoplasmic segment spans residues 444–463 (EGVITAVLDEFPHIWAKHRE). Residues 464–483 (WFVLAVVITCFFGSLTTLTF) form a helical membrane-spanning segment. Over 484-494 (GGAYVVKLLEE) the chain is Extracellular. The serotonin site is built by E494 and Y495. A helical membrane pass occupies residues 495 to 516 (YATGPAVLTVVFIEAIAVSWFY). Residues 517-538 (GVTQFCSDVKEMLGFSPGWFWR) are Cytoplasmic-facing. Residues 539-558 (ICWVAVSPVFLLFIICSFLM) traverse the membrane as a helical segment. Serotonin is bound by residues F556 and S559. Over 559 to 574 (SPPQLRLFQYSYPHWS) the chain is Extracellular. Residues 575 to 595 (VILGYCIGTSSVICIPTYITY) traverse the membrane as a helical segment. Topologically, residues 596–630 (RLVTTPGTLKERIIKSITPETPTEIPCGDICLNAV) are cytoplasmic. The segment at 616 to 624 (TPTEIPCGD) is interaction with RAB4A.

Belongs to the sodium:neurotransmitter symporter (SNF) (TC 2.A.22) family. SLC6A4 subfamily. Monomer or homooligomer. Interacts (via C-terminus) with SCAMP2; the interaction is direct and retains transporter molecules intracellularly. Interacts with filamentous actin and STX1A. Interacts (via the N-terminus) with STX1A (via the H3 domain); this interaction regulates SLC4A6 channel conductance. Interacts with SEC23A, SEC24C and PATJ. Interacts with NOS1; the interaction may diminish the cell surface localization of SERT in the brain and, correspondingly, reduce serotonin reuptake. Interacts with TGFB1I1. Interacts with ITGAV:ITGB3. Interacts (via C-terminus) with ITGB3; this interaction regulates SLC6A4 trafficking. Post-translationally, phosphorylation at Thr-276 increases 5-HT uptake and is required for cGMP-mediated SERT regulation. As to expression, expressed in the intestinal crypt epithelial cells (at protein level).

It localises to the cell membrane. The protein localises to the endomembrane system. Its subcellular location is the endosome membrane. The protein resides in the synapse. It is found in the cell junction. It localises to the focal adhesion. The protein localises to the cell projection. Its subcellular location is the neuron projection. It carries out the reaction serotonin(out) + K(+)(in) + Na(+)(out) + H(+)(in) = serotonin(in) + K(+)(out) + Na(+)(in) + H(+)(out). Its function is as follows. Serotonin transporter that cotransports serotonin with one Na(+) ion in exchange for one K(+) ion and possibly one proton in an overall electroneutral transport cycle. Transports serotonin across the plasma membrane from the extracellular compartment to the cytosol thus limiting serotonin intercellular signaling. Essential for serotonin homeostasis in the central nervous system. In the developing somatosensory cortex, acts in glutamatergic neurons to control serotonin uptake and its trophic functions accounting for proper spatial organization of cortical neurons and elaboration of sensory circuits. In the mature cortex, acts primarily in brainstem raphe neurons to mediate serotonin uptake from the synaptic cleft back into the pre-synaptic terminal thus terminating serotonin signaling at the synapse. Modulates mucosal serotonin levels in the gastrointestinal tract through uptake and clearance of serotonin in enterocytes. Required for enteric neurogenesis and gastrointestinal reflexes. Regulates blood serotonin levels by ensuring rapid high affinity uptake of serotonin from plasma to platelets, where it is further stored in dense granules via vesicular monoamine transporters and then released upon stimulation. Mechanistically, the transport cycle starts with an outward-open conformation having Na1(+) and Cl(-) sites occupied. The binding of a second extracellular Na2(+) ion and serotonin substrate leads to structural changes to outward-occluded to inward-occluded to inward-open, where the Na2(+) ion and serotonin are released into the cytosol. Binding of intracellular K(+) ion induces conformational transitions to inward-occluded to outward-open and completes the cycle by releasing K(+) possibly together with a proton bound to Asp-98 into the extracellular compartment. Na1(+) and Cl(-) ions remain bound throughout the transport cycle. Additionally, displays serotonin-induced channel-like conductance for monovalent cations, mainly Na(+) ions. The channel activity is uncoupled from the transport cycle and may contribute to the membrane resting potential or excitability. The polypeptide is Sodium-dependent serotonin transporter (SLC6A4) (Cavia porcellus (Guinea pig)).